Reading from the N-terminus, the 451-residue chain is FAD-dependent monooxygenase adrH (451 aa).

FAD contacts are provided by glutamate 39, glycine 53, and arginine 112. Tyrosine 196 is an active-site residue. FAD is bound by residues aspartate 288 and alanine 301. An N-linked (GlcNAc...) asparagine glycan is attached at asparagine 385. Residues 426–446 (TLLWVSSLALFLFFPWLGSYL) traverse the membrane as a helical segment.

Belongs to the paxM FAD-dependent monooxygenase family. It depends on FAD as a cofactor.

It is found in the membrane. The protein operates within secondary metabolite biosynthesis; terpenoid biosynthesis. Functionally, FAD-dependent monooxygenase; part of the gene cluster that mediates the biosynthesis of andrastins, meroterpenoid compounds that exhibit inhibitory activity against ras farnesyltransferase, suggesting that they could be promising leads for antitumor agents. The first step of the pathway is the synthesis of 3,5-dimethylorsellinic acid (DMOA) by the polyketide synthase adrD via condensation of one acetyl-CoA starter unit with 3 malonyl-CoA units and 2 methylations. DMAO is then converted to farnesyl-DMAO by the prenyltransferase adrG. The methyltransferase adrK catalyzes the methylation of the carboxyl group of farnesyl-DMAO to farnesyl-DMAO methyl ester which is further converted to epoxyfarnesyl-DMAO methyl ester by the FAD-dependent monooxygenase adrH. The terpene cyclase adrI then catalyzes the carbon skeletal rearrangement to generate the andrastin E, the first compound in the pathway having the andrastin scaffold, with the tetracyclic ring system. The post-cyclization tailoring enzymes adrF, adrE, adrJ, and adrA, are involved in the conversion of andrastin E into andrastin A. The short chain dehydrogenase adrF is responsible for the oxidation of the C-3 a hydroxyl group of andrastin E to yield the corresponding ketone, andrastin D. The ketoreductase adrE stereoselectively reduces the carbonyl moiety to reverse the stereochemistry of the C-3 position to yield andrastin F. The acetyltransferase adrJ is the acetyltransferase that attaches the acetyl group to the C-3 hydroxyl group of andrastin F to yield andrastin C. Finally, the cytochrome P450 monooxygenase adrA catalyzes two sequential oxidation reactions of the C-23 methyl group, to generate the corresponding alcohol andrastin B, and aldehyde andrastin A. In Penicillium rubens (strain ATCC 28089 / DSM 1075 / NRRL 1951 / Wisconsin 54-1255) (Penicillium chrysogenum), this protein is FAD-dependent monooxygenase adrH.